Reading from the N-terminus, the 219-residue chain is MTQDELKKAVGWAALDYVRPDTIVGVGTGSTAAHFIDALGSIKHQIKGAVSSSDASTEKLKSLGIPVFDANEVDSLDVYVDGADEINGHMQMIKGGGAALTREKIISALSRQFICIVDASKQVDVLGKFPLPVEVIPMARSYVARELVKLGGQPVYRQGVVTDNGNVILDVHNLNIMDAIAVENHINGIPGVVTVGLFANRGADVALVGTSEGVKTVVK.

Substrate contacts are provided by residues 28–31, 81–84, and 94–97; these read TGST, DGAD, and KGGG. E103 acts as the Proton acceptor in catalysis. K121 provides a ligand contact to substrate.

The protein belongs to the ribose 5-phosphate isomerase family. In terms of assembly, homodimer.

The enzyme catalyses aldehydo-D-ribose 5-phosphate = D-ribulose 5-phosphate. Its pathway is carbohydrate degradation; pentose phosphate pathway; D-ribose 5-phosphate from D-ribulose 5-phosphate (non-oxidative stage): step 1/1. In terms of biological role, catalyzes the reversible conversion of ribose-5-phosphate to ribulose 5-phosphate. This is Ribose-5-phosphate isomerase A from Pectobacterium carotovorum subsp. carotovorum (strain PC1).